Here is a 413-residue protein sequence, read N- to C-terminus: Multifunctional CCA protein (413 aa).

Gly8 and Arg11 together coordinate ATP. 2 residues coordinate CTP: Gly8 and Arg11. 2 residues coordinate Mg(2+): Asp21 and Asp23. Arg91, Arg137, and Arg140 together coordinate ATP. CTP contacts are provided by Arg91, Arg137, and Arg140. The HD domain maps to 228 to 329 (TGVHTLMTLS…VKLFDAIDAW (102 aa)).

The protein belongs to the tRNA nucleotidyltransferase/poly(A) polymerase family. Bacterial CCA-adding enzyme type 1 subfamily. In terms of assembly, monomer. Can also form homodimers and oligomers. Mg(2+) is required as a cofactor. Requires Ni(2+) as cofactor.

The enzyme catalyses a tRNA precursor + 2 CTP + ATP = a tRNA with a 3' CCA end + 3 diphosphate. It carries out the reaction a tRNA with a 3' CCA end + 2 CTP + ATP = a tRNA with a 3' CCACCA end + 3 diphosphate. Functionally, catalyzes the addition and repair of the essential 3'-terminal CCA sequence in tRNAs without using a nucleic acid template. Adds these three nucleotides in the order of C, C, and A to the tRNA nucleotide-73, using CTP and ATP as substrates and producing inorganic pyrophosphate. tRNA 3'-terminal CCA addition is required both for tRNA processing and repair. Also involved in tRNA surveillance by mediating tandem CCA addition to generate a CCACCA at the 3' terminus of unstable tRNAs. While stable tRNAs receive only 3'-terminal CCA, unstable tRNAs are marked with CCACCA and rapidly degraded. In Salmonella typhimurium (strain LT2 / SGSC1412 / ATCC 700720), this protein is Multifunctional CCA protein.